Consider the following 330-residue polypeptide: tRNA-modifying protein YgfZ (330 aa).

Folate contacts are provided by Trp-28 and Trp-190.

This sequence belongs to the tRNA-modifying YgfZ family.

Its subcellular location is the cytoplasm. Its function is as follows. Folate-binding protein involved in regulating the level of ATP-DnaA and in the modification of some tRNAs. It is probably a key factor in regulatory networks that act via tRNA modification, such as initiation of chromosomal replication. This chain is tRNA-modifying protein YgfZ, found in Serratia proteamaculans (strain 568).